A 623-amino-acid chain; its full sequence is Sterol O-acyltransferase 1 (623 aa).

A disordered region spans residues asparagine 20–aspartate 99. The span at alanine 57–alanine 72 shows a compositional bias: low complexity. Residues aspartate 83–alanine 92 are compositionally biased toward acidic residues. Transmembrane regions (helical) follow at residues leucine 195–phenylalanine 215, leucine 242–valine 262, glycine 277–valine 297, isoleucine 384–tyrosine 404, and isoleucine 422–methionine 442. Positions phenylalanine 504 to asparagine 510 match the FYXDWWN motif motif. The next 2 helical transmembrane spans lie at alanine 548 to phenylalanine 568 and valine 603 to leucine 623. The active site involves histidine 560.

The protein belongs to the membrane-bound acyltransferase family. Sterol o-acyltransferase subfamily.

It is found in the endoplasmic reticulum membrane. Sterol O-acyltransferase that catalyzes the formation of stery esters. The polypeptide is Sterol O-acyltransferase 1 (ARE1) (Saccharomyces uvarum (strain ATCC 76518 / CBS 7001 / CLIB 283 / NBRC 10550 / MCYC 623 / NCYC 2669 / NRRL Y-11845) (Yeast)).